Reading from the N-terminus, the 338-residue chain is Ferredoxin--NADP reductase (338 aa).

The FAD site is built by D32, Q40, Y45, V85, F120, D287, and T327.

It belongs to the ferredoxin--NADP reductase type 2 family. Homodimer. The cofactor is FAD.

It carries out the reaction 2 reduced [2Fe-2S]-[ferredoxin] + NADP(+) + H(+) = 2 oxidized [2Fe-2S]-[ferredoxin] + NADPH. In Wolbachia pipientis wMel, this protein is Ferredoxin--NADP reductase.